A 301-amino-acid chain; its full sequence is Glucose-1-phosphate adenylyltransferase large subunit (301 aa).

Belongs to the bacterial/plant glucose-1-phosphate adenylyltransferase family. Heterotetramer.

The protein resides in the plastid. The protein localises to the chloroplast. It localises to the amyloplast. It carries out the reaction alpha-D-glucose 1-phosphate + ATP + H(+) = ADP-alpha-D-glucose + diphosphate. It participates in glycan biosynthesis; starch biosynthesis. With respect to regulation, insensitive to 3'phosphoglycerate and orthophosphate. Functionally, this protein plays a role in synthesis of starch. It catalyzes the synthesis of the activated glycosyl donor, ADP-glucose from Glc-1-P and ATP. The chain is Glucose-1-phosphate adenylyltransferase large subunit (AGA.1) from Triticum aestivum (Wheat).